Here is a 553-residue protein sequence, read N- to C-terminus: Sensitive to high expression protein 9 homolog, mitochondrial (553 aa).

A disordered region spans residues 61-174; sequence FFSTQPPKDT…TAQPELPSRT (114 aa). A compositionally biased stretch (polar residues) spans 62–84; it reads FSTQPPKDTPENMNNKETGSSNV. Residues 103–116 show a composition bias toward basic and acidic residues; it reads AKEDTTDATNKSET. The span at 133–160 shows a compositional bias: low complexity; the sequence is SDVSSASTSDSANSSETTTTTSETTPEN. Coiled coils occupy residues 210-241 and 277-309; these read SAIE…HNYK and RLDH…DLNA. A helical membrane pass occupies residues 331–351; it reads WGTWGLMGVNVLLFLVLQFVA. Over 352 to 523 the chain is Mitochondrial intermembrane; it reads EPWRRKRLMK…RIDLKMRDVS (172 aa). 2 disordered regions span residues 408 to 428 and 443 to 497; these read ALAS…RTEG and AEEA…QTLS. 2 stretches are compositionally biased toward low complexity: residues 443–473 and 484–495; these read AEEA…QTPE and TWKQTAQKWQQT. A helical membrane pass occupies residues 524 to 544; the sequence is LLALESAATGAAVVASVAFFV. The Mitochondrial matrix portion of the chain corresponds to 545 to 553; sequence LRSSGSGKA.

Belongs to the SHE9 family. As to quaternary structure, homooligomer.

The protein resides in the mitochondrion inner membrane. Functionally, required for the maintenance of the structure of the mitochondrial inner membrane. Involved in mitochondrial morphology. Causes growth arrest when highly overexpressed. The polypeptide is Sensitive to high expression protein 9 homolog, mitochondrial (she-9) (Neurospora crassa (strain ATCC 24698 / 74-OR23-1A / CBS 708.71 / DSM 1257 / FGSC 987)).